The primary structure comprises 551 residues: CTP synthase (551 aa).

The tract at residues 1–267 is amidoligase domain; it reads MSGTKYIFVT…DALVLEKLGL (267 aa). S15 provides a ligand contact to CTP. S15 contributes to the UTP binding site. Residue 16-21 participates in ATP binding; it reads SIGKGT. L-glutamine is bound at residue Y56. ATP is bound at residue D73. Mg(2+) contacts are provided by D73 and E141. Residues 148–150, 188–193, and K224 each bind CTP; these read DIE and KTKPTQ. UTP contacts are provided by residues 188–193 and K224; that span reads KTKPTQ. Positions 292 to 534 constitute a Glutamine amidotransferase type-1 domain; that stretch reads RVAVIGKYIR…VGACLGAAEE (243 aa). G355 contacts L-glutamine. Catalysis depends on C382, which acts as the Nucleophile; for glutamine hydrolysis. L-glutamine is bound by residues 383–386, E406, and R462; that span reads LGMQ. Residues H507 and E509 contribute to the active site.

This sequence belongs to the CTP synthase family. Homotetramer.

The catalysed reaction is UTP + L-glutamine + ATP + H2O = CTP + L-glutamate + ADP + phosphate + 2 H(+). It carries out the reaction L-glutamine + H2O = L-glutamate + NH4(+). It catalyses the reaction UTP + NH4(+) + ATP = CTP + ADP + phosphate + 2 H(+). It participates in pyrimidine metabolism; CTP biosynthesis via de novo pathway; CTP from UDP: step 2/2. Allosterically activated by GTP, when glutamine is the substrate; GTP has no effect on the reaction when ammonia is the substrate. The allosteric effector GTP functions by stabilizing the protein conformation that binds the tetrahedral intermediate(s) formed during glutamine hydrolysis. Inhibited by the product CTP, via allosteric rather than competitive inhibition. Catalyzes the ATP-dependent amination of UTP to CTP with either L-glutamine or ammonia as the source of nitrogen. Regulates intracellular CTP levels through interactions with the four ribonucleotide triphosphates. The chain is CTP synthase from Rubrobacter xylanophilus (strain DSM 9941 / JCM 11954 / NBRC 16129 / PRD-1).